The following is a 208-amino-acid chain: Outer-membrane lipoprotein carrier protein (208 aa).

A signal peptide spans 1–22 (MKKIFAIAALSLPLFSHFPAFA).

Belongs to the LolA family. As to quaternary structure, monomer.

Its subcellular location is the periplasm. Functionally, participates in the translocation of lipoproteins from the inner membrane to the outer membrane. Only forms a complex with a lipoprotein if the residue after the N-terminal Cys is not an aspartate (The Asp acts as a targeting signal to indicate that the lipoprotein should stay in the inner membrane). This is Outer-membrane lipoprotein carrier protein from Shewanella halifaxensis (strain HAW-EB4).